Here is a 246-residue protein sequence, read N- to C-terminus: Alpha-amylase inhibitor 1 (246 aa).

The first 23 residues, M1–S23, serve as a signal peptide directing secretion. N35, N88, and N163 each carry an N-linked (GlcNAc...) asparagine glycan. Residues I240–L246 constitute a propeptide that is removed on maturation.

This sequence belongs to the leguminous lectin family. Heterodimer of chain 1 and chain 2. Proteolytic processing yields active form.

Lectin and alpha-amylase inhibitor. Acts as a defensive protein against insects. The protein is Alpha-amylase inhibitor 1 (LLP) of Phaseolus vulgaris (Kidney bean).